A 155-amino-acid chain; its full sequence is DNA gyrase inhibitor (155 aa).

Belongs to the DNA gyrase inhibitor family. As to quaternary structure, interacts with DNA gyrase.

The protein localises to the cytoplasm. Inhibits the supercoiling activity of DNA gyrase. Acts by inhibiting DNA gyrase at an early step, prior to (or at the step of) binding of DNA by the gyrase. It protects cells against toxins that target DNA gyrase, by inhibiting activity of these toxins and reducing the formation of lethal double-strand breaks in the cell. The sequence is that of DNA gyrase inhibitor from Edwardsiella piscicida.